We begin with the raw amino-acid sequence, 99 residues long: Malonate decarboxylase acyl carrier protein (99 aa).

Position 25 is an O-(phosphoribosyl dephospho-coenzyme A)serine (Ser25).

This sequence belongs to the MdcC family. Covalently binds the prosthetic group of malonate decarboxylase.

The protein resides in the cytoplasm. Its function is as follows. Subunit of malonate decarboxylase, it is an acyl carrier protein to which acetyl and malonyl thioester residues are bound via a 2'-(5''-phosphoribosyl)-3'-dephospho-CoA prosthetic group and turn over during the catalytic mechanism. The polypeptide is Malonate decarboxylase acyl carrier protein (Stutzerimonas stutzeri (strain A1501) (Pseudomonas stutzeri)).